The following is a 492-amino-acid chain: N-succinylglutamate 5-semialdehyde dehydrogenase (492 aa).

NAD(+) is bound at residue 220 to 225; the sequence is GSSTTG. Active-site residues include Glu243 and Cys277.

Belongs to the aldehyde dehydrogenase family. AstD subfamily.

The catalysed reaction is N-succinyl-L-glutamate 5-semialdehyde + NAD(+) + H2O = N-succinyl-L-glutamate + NADH + 2 H(+). It functions in the pathway amino-acid degradation; L-arginine degradation via AST pathway; L-glutamate and succinate from L-arginine: step 4/5. In terms of biological role, catalyzes the NAD-dependent reduction of succinylglutamate semialdehyde into succinylglutamate. The sequence is that of N-succinylglutamate 5-semialdehyde dehydrogenase from Klebsiella pneumoniae subsp. pneumoniae (strain ATCC 700721 / MGH 78578).